We begin with the raw amino-acid sequence, 221 residues long: Large ribosomal subunit protein uL3 (221 aa).

Belongs to the universal ribosomal protein uL3 family. As to quaternary structure, part of the 50S ribosomal subunit. Forms a cluster with proteins L14 and L19.

Its function is as follows. One of the primary rRNA binding proteins, it binds directly near the 3'-end of the 23S rRNA, where it nucleates assembly of the 50S subunit. The polypeptide is Large ribosomal subunit protein uL3 (Chlamydia trachomatis serovar A (strain ATCC VR-571B / DSM 19440 / HAR-13)).